Consider the following 184-residue polypeptide: Acireductone dioxygenase (184 aa).

4 residues coordinate Fe(2+): H97, H99, E103, and H141. The Ni(2+) site is built by H97, H99, E103, and H141.

The protein belongs to the acireductone dioxygenase (ARD) family. As to quaternary structure, monomer. The cofactor is Fe(2+). Ni(2+) is required as a cofactor.

It catalyses the reaction 1,2-dihydroxy-5-(methylsulfanyl)pent-1-en-3-one + O2 = 3-(methylsulfanyl)propanoate + CO + formate + 2 H(+). It carries out the reaction 1,2-dihydroxy-5-(methylsulfanyl)pent-1-en-3-one + O2 = 4-methylsulfanyl-2-oxobutanoate + formate + 2 H(+). Its pathway is amino-acid biosynthesis; L-methionine biosynthesis via salvage pathway; L-methionine from S-methyl-5-thio-alpha-D-ribose 1-phosphate: step 5/6. In terms of biological role, catalyzes 2 different reactions between oxygen and the acireductone 1,2-dihydroxy-3-keto-5-methylthiopentene (DHK-MTPene) depending upon the metal bound in the active site. Fe-containing acireductone dioxygenase (Fe-ARD) produces formate and 2-keto-4-methylthiobutyrate (KMTB), the alpha-ketoacid precursor of methionine in the methionine recycle pathway. Ni-containing acireductone dioxygenase (Ni-ARD) produces methylthiopropionate, carbon monoxide and formate, and does not lie on the methionine recycle pathway. The chain is Acireductone dioxygenase from Parvibaculum lavamentivorans (strain DS-1 / DSM 13023 / NCIMB 13966).